The primary structure comprises 627 residues: Pescadillo homolog (627 aa).

The BRCT domain maps to 321–414 (RLRTLFKGLK…QLLPTNKYFI (94 aa)). Disordered regions lie at residues 450–469 (HVQS…ETVD), 488–562 (YKKF…LQAR), and 595–627 (TIEA…KLGK). 2 positions are modified to phosphoserine: Ser453 and Ser457. Acidic residues-rich tracts occupy residues 454–469 (DDDS…ETVD) and 497–521 (VNED…EELD). The stretch at 507-538 (DDDNEDDDEEEEELDEKTKRLQEEKQKMSVQS) forms a coiled coil. Residues 522–533 (EKTKRLQEEKQK) are compositionally biased toward basic and acidic residues. The segment covering 540–549 (KVHKVNKRQV) has biased composition (basic residues). Composition is skewed to basic and acidic residues over residues 550 to 559 (HKAEVDEHRL) and 595 to 615 (TIEA…RKEA). Residues 582 to 625 (KEKEEWLLRKKRRTIEASEKEARKTAKREARKEAAAAAAKASKL) are a coiled coil. The span at 616-627 (AAAAAKASKLGK) shows a compositional bias: low complexity.

This sequence belongs to the pescadillo family.

The protein localises to the nucleus. It is found in the nucleolus. Its subcellular location is the nucleoplasm. Its function is as follows. Required for maturation of ribosomal RNAs and formation of the large ribosomal subunit. This chain is Pescadillo homolog, found in Drosophila sechellia (Fruit fly).